A 650-amino-acid polypeptide reads, in one-letter code: Chaperone protein DnaK (650 aa).

Thr-200 is subject to Phosphothreonine; by autocatalysis. Residues 612–632 (GEGATAGAAAGAGAAGGQQAQ) are compositionally biased toward low complexity. The interval 612–650 (GEGATAGAAAGAGAAGGQQAQPQDDNVVDAEFKEVNDKK) is disordered. Basic and acidic residues predominate over residues 641 to 650 (AEFKEVNDKK).

The protein belongs to the heat shock protein 70 family.

Functionally, acts as a chaperone. The sequence is that of Chaperone protein DnaK from Cupriavidus necator (strain ATCC 17699 / DSM 428 / KCTC 22496 / NCIMB 10442 / H16 / Stanier 337) (Ralstonia eutropha).